The chain runs to 1154 residues: BEACH domain-containing protein lvsF (1154 aa).

Disordered stretches follow at residues 92–123 (HLPT…EQPS) and 139–167 (TSKV…PTPT). The segment covering 145–158 (PTPPTPTPTPPTPQ) has biased composition (pro residues). The 96-residue stretch at 289–384 (DMNERNILEL…TRNQVYDLLV (96 aa)) folds into the BEACH-type PH domain. One can recognise a BEACH domain in the interval 389–697 (TNIMHINEQA…QIFKTPHPQR (309 aa)). 3 disordered regions span residues 554-575 (SFES…NFEN), 739-762 (NNLN…LNNN), and 779-825 (NSLN…ENLN). Low complexity-rich tracts occupy residues 779-788 (NSLNNENNEN) and 795-822 (NSNS…NENE). WD repeat units lie at residues 858 to 897 (LHKD…QIRS), 900 to 939 (LCNL…ISYS), 942 to 980 (GHSD…NGAI), 992 to 1031 (DSDT…LIRR), 1034 to 1074 (CFFD…FSFK), 1076 to 1110 (KGEI…EIKD), and 1119 to 1154 (SSNE…IWQQ).

The protein is BEACH domain-containing protein lvsF (lvsF) of Dictyostelium discoideum (Social amoeba).